Here is a 296-residue protein sequence, read N- to C-terminus: Glycine N-acyltransferase (296 aa).

K16 bears the N6-acetyllysine; alternate mark. Position 16 is an N6-succinyllysine; alternate (K16). An N6-acetyllysine modification is found at K113. N6-acetyllysine; alternate occurs at positions 127 and 142. 2 positions are modified to N6-succinyllysine; alternate: K127 and K142. At K159 the chain carries N6-acetyllysine. The residue at position 169 (K169) is an N6-succinyllysine. K183 and K256 each carry N6-acetyllysine; alternate. An N6-succinyllysine; alternate mark is found at K183 and K256. K267 carries the post-translational modification N6-succinyllysine.

The protein belongs to the glycine N-acyltransferase family.

The protein localises to the mitochondrion. The catalysed reaction is an acyl-CoA + glycine = an N-acylglycine + CoA + H(+). The enzyme catalyses benzoyl-CoA + glycine = N-benzoylglycine + CoA + H(+). Functionally, mitochondrial acyltransferase which transfers an acyl group to the N-terminus of glycine and glutamine, although much less efficiently. Can conjugate a multitude of substrates to form a variety of N-acylglycines, thereby detoxify xenobiotics, such as benzoic acid or salicylic acid, and endogenous organic acids, such as isovaleric acid. The protein is Glycine N-acyltransferase (Glyat) of Rattus norvegicus (Rat).